We begin with the raw amino-acid sequence, 357 residues long: Peptide chain release factor 1 (357 aa).

Glutamine 232 carries the post-translational modification N5-methylglutamine.

The protein belongs to the prokaryotic/mitochondrial release factor family. Methylated by PrmC. Methylation increases the termination efficiency of RF1.

The protein resides in the cytoplasm. Its function is as follows. Peptide chain release factor 1 directs the termination of translation in response to the peptide chain termination codons UAG and UAA. The protein is Peptide chain release factor 1 of Oleidesulfovibrio alaskensis (strain ATCC BAA-1058 / DSM 17464 / G20) (Desulfovibrio alaskensis).